The following is a 105-amino-acid chain: Translation initiation factor 1A 2 (105 aa).

Residues 1–22 are disordered; sequence MRKRREGSAAPSTQEVTRVRTP. The S1-like domain occupies 17–91; it reads TRVRTPRKEN…TKADVIWKYT (75 aa).

The protein belongs to the eIF-1A family.

Functionally, seems to be required for maximal rate of protein biosynthesis. Enhances ribosome dissociation into subunits and stabilizes the binding of the initiator Met-tRNA(I) to 40 S ribosomal subunits. This Methanosarcina acetivorans (strain ATCC 35395 / DSM 2834 / JCM 12185 / C2A) protein is Translation initiation factor 1A 2 (eIF1A2).